Reading from the N-terminus, the 247-residue chain is Flagellin B1 (247 aa).

A propeptide spanning residues 1-20 (MNKLLRKVRKAFSLKADNKA) is cleaved from the precursor.

This sequence belongs to the archaeal flagellin family. Glycosylated.

Its subcellular location is the archaeal flagellum. Flagellin is the subunit protein which polymerizes to form the filaments of archaeal flagella. The polypeptide is Flagellin B1 (Thermoplasma volcanium (strain ATCC 51530 / DSM 4299 / JCM 9571 / NBRC 15438 / GSS1)).